The sequence spans 65 residues: Alpha-toxin BeM10 (65 aa).

Residues 2–65 (RDGYIADDKD…IKQKVSGKCN (64 aa)) form the LCN-type CS-alpha/beta domain. Disulfide bonds link cysteine 12–cysteine 64, cysteine 16–cysteine 35, cysteine 22–cysteine 45, and cysteine 26–cysteine 47.

It belongs to the long (4 C-C) scorpion toxin superfamily. Sodium channel inhibitor family. Alpha subfamily. In terms of tissue distribution, expressed by the venom gland.

The protein resides in the secreted. Alpha toxins bind voltage-independently at site-3 of sodium channels (Nav) and inhibit the inactivation of the activated channels, thereby blocking neuronal transmission. Has paralytic activity in mice. The polypeptide is Alpha-toxin BeM10 (Mesobuthus eupeus (Lesser Asian scorpion)).